A 99-amino-acid chain; its full sequence is UPF0729 protein CG18508 (99 aa).

The tract at residues 60 to 99 (PGGKKTENVSDDDAEESENPPLNATAMAAETEVDESKKEI) is disordered. The segment covering 68–77 (VSDDDAEESE) has biased composition (acidic residues). Ser-69 is subject to Phosphoserine.

The protein belongs to the UPF0729 family.

The sequence is that of UPF0729 protein CG18508 from Drosophila melanogaster (Fruit fly).